Consider the following 120-residue polypeptide: Large ribosomal subunit protein uL18 (120 aa).

It belongs to the universal ribosomal protein uL18 family. In terms of assembly, part of the 50S ribosomal subunit; part of the 5S rRNA/L5/L18/L25 subcomplex. Contacts the 5S and 23S rRNAs.

In terms of biological role, this is one of the proteins that bind and probably mediate the attachment of the 5S RNA into the large ribosomal subunit, where it forms part of the central protuberance. The polypeptide is Large ribosomal subunit protein uL18 (Rhodopseudomonas palustris (strain HaA2)).